A 222-amino-acid chain; its full sequence is V-type ATP synthase subunit D (222 aa).

This sequence belongs to the V-ATPase D subunit family.

Produces ATP from ADP in the presence of a proton gradient across the membrane. This chain is V-type ATP synthase subunit D, found in Acetivibrio thermocellus (strain ATCC 27405 / DSM 1237 / JCM 9322 / NBRC 103400 / NCIMB 10682 / NRRL B-4536 / VPI 7372) (Clostridium thermocellum).